A 488-amino-acid polypeptide reads, in one-letter code: Glutamyl-tRNA(Gln) amidotransferase subunit A (488 aa).

Residues Lys77 and Ser152 each act as charge relay system in the active site. Ser176 (acyl-ester intermediate) is an active-site residue.

The protein belongs to the amidase family. GatA subfamily. In terms of assembly, heterotrimer of A, B and C subunits.

The catalysed reaction is L-glutamyl-tRNA(Gln) + L-glutamine + ATP + H2O = L-glutaminyl-tRNA(Gln) + L-glutamate + ADP + phosphate + H(+). In terms of biological role, allows the formation of correctly charged Gln-tRNA(Gln) through the transamidation of misacylated Glu-tRNA(Gln) in organisms which lack glutaminyl-tRNA synthetase. The reaction takes place in the presence of glutamine and ATP through an activated gamma-phospho-Glu-tRNA(Gln). The protein is Glutamyl-tRNA(Gln) amidotransferase subunit A of Streptococcus sanguinis (strain SK36).